The following is a 329-amino-acid chain: Biotin synthase (329 aa).

The Radical SAM core domain maps to 48–278 (FLGNGVDLCS…TKKIAVCGGR (231 aa)). [4Fe-4S] cluster contacts are provided by Cys66, Cys70, and Cys73. Positions 143 and 203 each coordinate [2Fe-2S] cluster.

The protein belongs to the radical SAM superfamily. Biotin synthase family. Homodimer. The cofactor is [4Fe-4S] cluster. [2Fe-2S] cluster serves as cofactor.

The catalysed reaction is (4R,5S)-dethiobiotin + (sulfur carrier)-SH + 2 reduced [2Fe-2S]-[ferredoxin] + 2 S-adenosyl-L-methionine = (sulfur carrier)-H + biotin + 2 5'-deoxyadenosine + 2 L-methionine + 2 oxidized [2Fe-2S]-[ferredoxin]. It participates in cofactor biosynthesis; biotin biosynthesis; biotin from 7,8-diaminononanoate: step 2/2. Functionally, catalyzes the conversion of dethiobiotin (DTB) to biotin by the insertion of a sulfur atom into dethiobiotin via a radical-based mechanism. The protein is Biotin synthase of Geobacter metallireducens (strain ATCC 53774 / DSM 7210 / GS-15).